A 378-amino-acid polypeptide reads, in one-letter code: Carbamoyl phosphate synthase small chain (378 aa).

The tract at residues 1–189 (MTKPAILALA…DSHPEIPAGE (189 aa)) is CPSase. 3 residues coordinate L-glutamine: Ser47, Gly241, and Gly243. Residues 193–378 (HVVAYDYGVK…RFISAMAERR (186 aa)) enclose the Glutamine amidotransferase type-1 domain. Catalysis depends on Cys269, which acts as the Nucleophile. Positions 270, 273, 311, 313, and 314 each coordinate L-glutamine. Residues His353 and Glu355 contribute to the active site.

The protein belongs to the CarA family. As to quaternary structure, composed of two chains; the small (or glutamine) chain promotes the hydrolysis of glutamine to ammonia, which is used by the large (or ammonia) chain to synthesize carbamoyl phosphate. Tetramer of heterodimers (alpha,beta)4.

The catalysed reaction is hydrogencarbonate + L-glutamine + 2 ATP + H2O = carbamoyl phosphate + L-glutamate + 2 ADP + phosphate + 2 H(+). It catalyses the reaction L-glutamine + H2O = L-glutamate + NH4(+). The protein operates within amino-acid biosynthesis; L-arginine biosynthesis; carbamoyl phosphate from bicarbonate: step 1/1. Its pathway is pyrimidine metabolism; UMP biosynthesis via de novo pathway; (S)-dihydroorotate from bicarbonate: step 1/3. In terms of biological role, small subunit of the glutamine-dependent carbamoyl phosphate synthetase (CPSase). CPSase catalyzes the formation of carbamoyl phosphate from the ammonia moiety of glutamine, carbonate, and phosphate donated by ATP, constituting the first step of 2 biosynthetic pathways, one leading to arginine and/or urea and the other to pyrimidine nucleotides. The small subunit (glutamine amidotransferase) binds and cleaves glutamine to supply the large subunit with the substrate ammonia. The protein is Carbamoyl phosphate synthase small chain of Pseudomonas aeruginosa (strain ATCC 15692 / DSM 22644 / CIP 104116 / JCM 14847 / LMG 12228 / 1C / PRS 101 / PAO1).